The following is a 217-amino-acid chain: FMN-dependent NADH:quinone oxidoreductase (217 aa).

FMN-binding positions include Ser-10 and 16–18 (SVS).

It belongs to the azoreductase type 1 family. Homodimer. It depends on FMN as a cofactor.

It catalyses the reaction 2 a quinone + NADH + H(+) = 2 a 1,4-benzosemiquinone + NAD(+). The catalysed reaction is N,N-dimethyl-1,4-phenylenediamine + anthranilate + 2 NAD(+) = 2-(4-dimethylaminophenyl)diazenylbenzoate + 2 NADH + 2 H(+). Quinone reductase that provides resistance to thiol-specific stress caused by electrophilic quinones. Its function is as follows. Also exhibits azoreductase activity. Catalyzes the reductive cleavage of the azo bond in aromatic azo compounds to the corresponding amines. This is FMN-dependent NADH:quinone oxidoreductase from Polaromonas naphthalenivorans (strain CJ2).